A 346-amino-acid polypeptide reads, in one-letter code: tRNA N6-adenosine threonylcarbamoyltransferase (346 aa).

Fe cation-binding residues include histidine 117 and histidine 121. Substrate is bound by residues 139 to 143, aspartate 172, glycine 185, aspartate 189, and asparagine 278; that span reads VVSGG. Residue aspartate 307 coordinates Fe cation.

The protein belongs to the KAE1 / TsaD family. As to quaternary structure, may form a heterodimer with TsaB. It depends on Fe(2+) as a cofactor.

The protein resides in the cytoplasm. It carries out the reaction L-threonylcarbamoyladenylate + adenosine(37) in tRNA = N(6)-L-threonylcarbamoyladenosine(37) in tRNA + AMP + H(+). Required for the formation of a threonylcarbamoyl group on adenosine at position 37 (t(6)A37) in tRNAs that read codons beginning with adenine. Is involved in the transfer of the threonylcarbamoyl moiety of threonylcarbamoyl-AMP (TC-AMP) to the N6 group of A37, together with TsaE and TsaB; this reaction does not require ATP in vitro. TsaD likely plays a direct catalytic role in this reaction. The protein is tRNA N6-adenosine threonylcarbamoyltransferase of Bacillus subtilis (strain 168).